Here is a 185-residue protein sequence, read N- to C-terminus: ATP synthase subunit delta (185 aa).

This sequence belongs to the ATPase delta chain family. As to quaternary structure, F-type ATPases have 2 components, F(1) - the catalytic core - and F(0) - the membrane proton channel. F(1) has five subunits: alpha(3), beta(3), gamma(1), delta(1), epsilon(1). F(0) has three main subunits: a(1), b(2) and c(10-14). The alpha and beta chains form an alternating ring which encloses part of the gamma chain. F(1) is attached to F(0) by a central stalk formed by the gamma and epsilon chains, while a peripheral stalk is formed by the delta and b chains.

It localises to the cell inner membrane. F(1)F(0) ATP synthase produces ATP from ADP in the presence of a proton or sodium gradient. F-type ATPases consist of two structural domains, F(1) containing the extramembraneous catalytic core and F(0) containing the membrane proton channel, linked together by a central stalk and a peripheral stalk. During catalysis, ATP synthesis in the catalytic domain of F(1) is coupled via a rotary mechanism of the central stalk subunits to proton translocation. Functionally, this protein is part of the stalk that links CF(0) to CF(1). It either transmits conformational changes from CF(0) to CF(1) or is implicated in proton conduction. In Coxiella burnetii (strain CbuK_Q154) (Coxiella burnetii (strain Q154)), this protein is ATP synthase subunit delta.